The chain runs to 76 residues: UPF0291 protein BT9727_1737 (76 aa).

This sequence belongs to the UPF0291 family.

The protein localises to the cytoplasm. The chain is UPF0291 protein BT9727_1737 from Bacillus thuringiensis subsp. konkukian (strain 97-27).